Here is a 285-residue protein sequence, read N- to C-terminus: Protease HtpX homolog (285 aa).

2 helical membrane-spanning segments follow: residues 7 to 27 (TAML…MIGG) and 30 to 50 (GMTI…WFSD). Histidine 131 lines the Zn(2+) pocket. Residue glutamate 132 is part of the active site. A Zn(2+)-binding site is contributed by histidine 135. A run of 2 helical transmembrane segments spans residues 146 to 166 (ITAT…FFGG) and 177 to 197 (IAGI…QMAI). Zn(2+) is bound at residue glutamate 202.

Belongs to the peptidase M48B family. It depends on Zn(2+) as a cofactor.

It localises to the cell inner membrane. The sequence is that of Protease HtpX homolog from Burkholderia ambifaria (strain MC40-6).